The sequence spans 156 residues: Endoribonuclease YbeY (156 aa).

The Zn(2+) site is built by His122, His126, and His132.

Belongs to the endoribonuclease YbeY family. It depends on Zn(2+) as a cofactor.

It localises to the cytoplasm. Its function is as follows. Single strand-specific metallo-endoribonuclease involved in late-stage 70S ribosome quality control and in maturation of the 3' terminus of the 16S rRNA. The polypeptide is Endoribonuclease YbeY (Bacillus cytotoxicus (strain DSM 22905 / CIP 110041 / 391-98 / NVH 391-98)).